Reading from the N-terminus, the 69-residue chain is Small archaeal modifier protein 2 (69 aa).

A Glycyl lysine isopeptide (Lys-Gly) (interchain with G-Cter in SAMP2) cross-link involves residue Lys55. Gly69 carries the post-translational modification 1-thioglycine; alternate. The residue at position 69 (Gly69) is a Glycyl adenylate; alternate. Gly69 participates in a covalent cross-link: Glycyl lysine isopeptide (Gly-Lys) (interchain with K-? in acceptor proteins); alternate.

In terms of processing, the C-terminal glycine is likely acyl-adenylated (-COAMP) by UbaA, and also probably thiocarboxylated (-COSH) to function in sulfur transfer.

Functions as a protein modifier covalently attached to lysine residues of substrate proteins, as well as a sulfur carrier in tRNA thiolation. The protein modification process is termed sampylation and involves the formation of an isopeptide bond between the SAMP2 C-terminal glycine carboxylate and the epsilon-amino group of lysine residues on target proteins. Is able to form polymeric chains with itself likely at Lys-55, similar to ubiquitin and other ubiquitin-like proteins. May serve as a proteolytic signal in the cell to target proteins for degradation by proteasomes. In Pyrococcus furiosus (strain ATCC 43587 / DSM 3638 / JCM 8422 / Vc1), this protein is Small archaeal modifier protein 2.